A 61-amino-acid polypeptide reads, in one-letter code: Large ribosomal subunit protein bL28 (61 aa).

The disordered stretch occupies residues 1-26; the sequence is MAKDFLNGKRTHFGNKRSHALNSSRR. The segment covering 9 to 19 has biased composition (basic residues); it reads KRTHFGNKRSH.

Belongs to the bacterial ribosomal protein bL28 family.

This is Large ribosomal subunit protein bL28 from Levilactobacillus brevis (strain ATCC 367 / BCRC 12310 / CIP 105137 / JCM 1170 / LMG 11437 / NCIMB 947 / NCTC 947) (Lactobacillus brevis).